A 252-amino-acid chain; its full sequence is Phosphate import ATP-binding protein PstB (252 aa).

The ABC transporter domain maps to 5–247; the sequence is LIASDVNIFY…PRDERTEAYV (243 aa). Position 37–44 (37–44) interacts with ATP; the sequence is GPSGCGKT.

This sequence belongs to the ABC transporter superfamily. Phosphate importer (TC 3.A.1.7) family. In terms of assembly, the complex is composed of two ATP-binding proteins (PstB), two transmembrane proteins (PstC and PstA) and a solute-binding protein (PstS).

It is found in the cell membrane. The catalysed reaction is phosphate(out) + ATP + H2O = ADP + 2 phosphate(in) + H(+). In terms of biological role, part of the ABC transporter complex PstSACB involved in phosphate import. Responsible for energy coupling to the transport system. The sequence is that of Phosphate import ATP-binding protein PstB from Deinococcus geothermalis (strain DSM 11300 / CIP 105573 / AG-3a).